The chain runs to 778 residues: Endonuclease MutS2 (778 aa).

Position 328-335 (328-335 (GPNTGGKT)) interacts with ATP. One can recognise a Smr domain in the interval 702–777 (LDLRGKRYEE…GSGATIVTFK (76 aa)).

It belongs to the DNA mismatch repair MutS family. MutS2 subfamily. In terms of assembly, homodimer. Binds to stalled ribosomes, contacting rRNA.

Its function is as follows. Endonuclease that is involved in the suppression of homologous recombination and thus may have a key role in the control of bacterial genetic diversity. In terms of biological role, acts as a ribosome collision sensor, splitting the ribosome into its 2 subunits. Detects stalled/collided 70S ribosomes which it binds and splits by an ATP-hydrolysis driven conformational change. Acts upstream of the ribosome quality control system (RQC), a ribosome-associated complex that mediates the extraction of incompletely synthesized nascent chains from stalled ribosomes and their subsequent degradation. Probably generates substrates for RQC. This is Endonuclease MutS2 from Streptococcus pneumoniae (strain Taiwan19F-14).